The following is a 180-amino-acid chain: E1B protein, small T-antigen (180 aa).

Residues 142-180 are disordered; it reads GPAAPLARQGSQQEEQQQRQEEEQVQEEMRSGLDPPTEN. Basic and acidic residues predominate over residues 157 to 172; sequence QQQRQEEEQVQEEMRS.

The protein belongs to the adenoviridae E1B 19 kDa protein family.

The protein is E1B protein, small T-antigen of Simian adenovirus serotype 7 (SAdV-7).